The chain runs to 177 residues: Alkyl hydroperoxide reductase AhpD (177 aa).

The Proton donor role is filled by Cys130. Cysteines 130 and 133 form a disulfide. The active-site Cysteine sulfenic acid (-SOH) intermediate is Cys133.

This sequence belongs to the AhpD family. In terms of assembly, homotrimer.

It catalyses the reaction N(6)-[(R)-dihydrolipoyl]-L-lysyl-[lipoyl-carrier protein] + a hydroperoxide = N(6)-[(R)-lipoyl]-L-lysyl-[lipoyl-carrier protein] + an alcohol + H2O. In terms of biological role, antioxidant protein with alkyl hydroperoxidase activity. Required for the reduction of the AhpC active site cysteine residues and for the regeneration of the AhpC enzyme activity. The polypeptide is Alkyl hydroperoxide reductase AhpD (Mycobacterium bovis (strain ATCC BAA-935 / AF2122/97)).